A 347-amino-acid chain; its full sequence is Probable dual-specificity RNA methyltransferase RlmN (347 aa).

E91 serves as the catalytic Proton acceptor. Residues Y97–D327 form the Radical SAM core domain. C104 and C332 are joined by a disulfide. The [4Fe-4S] cluster site is built by C111, C115, and C118. Residues G158–E159, S190, S213–H215, and N289 contribute to the S-adenosyl-L-methionine site. Residue C332 is the S-methylcysteine intermediate of the active site.

This sequence belongs to the radical SAM superfamily. RlmN family. [4Fe-4S] cluster is required as a cofactor.

It localises to the cytoplasm. The enzyme catalyses adenosine(2503) in 23S rRNA + 2 reduced [2Fe-2S]-[ferredoxin] + 2 S-adenosyl-L-methionine = 2-methyladenosine(2503) in 23S rRNA + 5'-deoxyadenosine + L-methionine + 2 oxidized [2Fe-2S]-[ferredoxin] + S-adenosyl-L-homocysteine. It carries out the reaction adenosine(37) in tRNA + 2 reduced [2Fe-2S]-[ferredoxin] + 2 S-adenosyl-L-methionine = 2-methyladenosine(37) in tRNA + 5'-deoxyadenosine + L-methionine + 2 oxidized [2Fe-2S]-[ferredoxin] + S-adenosyl-L-homocysteine. Functionally, specifically methylates position 2 of adenine 2503 in 23S rRNA and position 2 of adenine 37 in tRNAs. The protein is Probable dual-specificity RNA methyltransferase RlmN of Clostridium perfringens (strain SM101 / Type A).